The following is a 530-amino-acid chain: MGSESLETLQVILSGGEFMLHTSVWLVPGSLLSSHPVFTFKVKQENNGPTFWRRKVSRTLNESSLRSQQESSTPFKDPTSHPSDLKELSPAGQGTSRPLPTLSSCQSMAATDMPVCSLSLASSTNEPQELPDPRDAPREGSFRLDGNQSEFGLGNSLPASPLHSCRNLEKEESELHLYIISATSSIFLHLKSSWNNYIIRATLLQDPLCASEHNDVIGKPKPYRSEEKIKHFCQLKSELFLKDNTLRKILCLITELRVAAQRNFILKRLFWKTSELFYFLVNKLHEYLPESRDKHALQNKSQRADELMACIEIIQTLGLMFRETEIESSRLNTLAAKKGTLFNLLVILISKPKVPKSCSKSDAQPVADPTSAEVFFDSQLQKLTLEYTDTATALLYEILLIFQQGNLGLGSTKFAISWMMSFLQSCPPIMAFVARIVEGVVRGLSASFQLLTPCQAVLLYQQFYILRSCLQHSKALAEYIRNDHREEFRYFIHMPALEQRLPGCYPITEPTTQLCHEVLQLIEQKQCAKC.

2 stretches are compositionally biased toward polar residues: residues Leu60 to Pro74 and Gly92 to Ser103. 2 disordered regions span residues Leu60–Ser103 and Ala121–Asn155. The span at Pro131–Phe142 shows a compositional bias: basic and acidic residues.

This is an uncharacterized protein from Mus musculus (Mouse).